We begin with the raw amino-acid sequence, 240 residues long: MAEPGRPWAQARSAYRASEVLRRGTGRRRDPGPQSNGPGQEDARAPGRMARLRGQLRAEAASRSEVPRLLKLVERAGAGAAGRGREDRRAQPRAPCARYAGSPAAGPPTRRGSWRSASGGCRRAWRQCARSWAPGLRRCARSFERSWMPCARCCRRRRPRLPAASPAPSPAPRPAARPCRGRSAPLAPWSPPPGPQTTPRTAQQNAERTEPRPGRTTRRCQCRLGPRKVAGTEGGRTRAA.

Disordered stretches follow at residues 1-117 (MAEP…WRSA) and 161-240 (LPAA…TRAA). Composition is skewed to basic and acidic residues over residues 19 to 31 (EVLRRGTGRRRDP) and 60 to 74 (AASRSEVPRLLKLVE). Over residues 165 to 175 (SPAPSPAPRPA) the composition is skewed to pro residues. Positions 176–187 (ARPCRGRSAPLA) are enriched in low complexity.

The protein belongs to the FAM246 family.

The sequence is that of Protein FAM246C from Homo sapiens (Human).